We begin with the raw amino-acid sequence, 384 residues long: Putative ankyrin repeat protein L72 (384 aa).

ANK repeat units lie at residues 88 to 117 (ADMC…NIKN), 119 to 146 (GNLL…KEFS), 171 to 200 (DHNV…ILSV), 202 to 231 (DDSL…DIES), 233 to 261 (NNYC…NPNN), 298 to 324 (ILYQ…AGIK), and 325 to 357 (PTNS…DINV).

The protein is Putative ankyrin repeat protein L72 of Acanthamoeba polyphaga (Amoeba).